Consider the following 431-residue polypeptide: Levansucrase Lscbeta (431 aa).

5 residues coordinate sucrose: W61, D62, A148, R218, and D219. The active-site Nucleophile is D62. Catalysis depends on E303, which acts as the Proton donor/acceptor.

Belongs to the glycosyl hydrolase 68 family. Homodimer.

The enzyme catalyses [6)-beta-D-fructofuranosyl-(2-&gt;](n) alpha-D-glucopyranoside + sucrose = [6)-beta-D-fructofuranosyl-(2-&gt;](n+1) alpha-D-glucopyranoside + D-glucose. With respect to regulation, sucrose hydrolase activity is negatively affected by salt concentration. The levan polymerization rate is constant regardless of sucrose concentration. In terms of biological role, catalyzes the synthesis of levan, a fructose polymer, by transferring the fructosyl moiety from sucrose to a growing acceptor molecule. Also displays sucrose hydrolase activity. The chain is Levansucrase Lscbeta from Pseudomonas syringae pv. actinidiae.